Consider the following 666-residue polypeptide: uncharacterized protein (666 aa).

This is an uncharacterized protein from Invertebrate iridescent virus 6 (IIV-6).